The following is a 103-amino-acid chain: Cell division topological specificity factor (103 aa).

This sequence belongs to the MinE family.

Prevents the cell division inhibition by proteins MinC and MinD at internal division sites while permitting inhibition at polar sites. This ensures cell division at the proper site by restricting the formation of a division septum at the midpoint of the long axis of the cell. The protein is Cell division topological specificity factor of Prochlorococcus marinus (strain MIT 9211).